A 246-amino-acid polypeptide reads, in one-letter code: Probable transcriptional regulatory protein ASA_2843 (246 aa).

The protein belongs to the TACO1 family.

The protein localises to the cytoplasm. The sequence is that of Probable transcriptional regulatory protein ASA_2843 from Aeromonas salmonicida (strain A449).